The chain runs to 53 residues: Membrane antigen containing repeating peptides (53 aa).

6 tandem repeats follow at residues 1-10 (EAEEAARLQA), 11-20 (EAEEAARQQA), 21-30 (EAEEAARLQA), 31-40 (EAEEAARLQA), 41-50 (EAEEAARLQA), and 51-53 (EAE). The 6 X 10 AA tandem repeats stretch occupies residues 1–53 (EAEEAARLQAEAEEAARQQAEAEEAARLQAEAEEAARLQAEAEEAARLQAEAE). Residues 1 to 53 (EAEEAARLQAEAEEAARQQAEAEEAARLQAEAEEAARLQAEAEEAARLQAEAE) form a disordered region.

The protein resides in the membrane. The sequence is that of Membrane antigen containing repeating peptides from Leishmania major.